The chain runs to 659 residues: MMQESGTEAANGTAHQNGAPPSVEGHREVRSKSTTPSSDITASDIINFQQHQALQVARQILLQQQQQSSVHKSPKNNDKQPATQVPVSVAMMTPQVITPQQMQQILQHQVLSPQQLQLLLQQQQALMLQQQLQEFYKKQQEQLHLQLIQQQHGSKQQSKEVSAQQLAFQQQLLQVQQLQQQHLLSLQRQGLLSIQPNQTLPLHTLTQGMIPAELQQLWKEVTNSHVKEENSVTNNGHRGLDLSSPSPVPLKNHNQHGSTNGQYISHSLKREGSTLDDHSPHSHPLYGHGVCKWPGCEAVFEDFQSFLKHLNNEHALDDRSTAQCRVQMQVVQQLELQLAKDKERLQAMMTHLHVKSTEPKPTPQPLNLVSNVALSKTAPAASPPLSLPQTPTTPTAPLTPLSQTHSVITPTSLHSVGPIRRRYSDKYNMPISPDIVQNKEFYMNAEVRPPFTYASLIRQAILESPEKQLTLNEIYNWFTRMFAYFRRNAATWKNAVRHNLSLHKCFVRVENVKGAVWTVDELEFQKRRPQKISGSPALVKNIHTTLGYGPALSAAFQASMAENIPLYTTASIGSPTLNSLASVIREEMNGAMDHGNSNGSDSSPGRSPLPAMHHISVKEEPMDPEEHEGPLSLVTTANHSPDFDHHRDYEDDHGTEDML.

2 stretches are compositionally biased toward polar residues: residues 1–16 (MMQE…TAHQ) and 32–41 (KSTTPSSDIT). Disordered regions lie at residues 1 to 41 (MMQE…SDIT) and 229 to 263 (ENSV…NGQY). The C2H2-type zinc-finger motif lies at 289–314 (GVCKWPGCEAVFEDFQSFLKHLNNEH). The segment at 331 to 352 (VQQLELQLAKDKERLQAMMTHL) is leucine-zipper. The interval 365-369 (PLNLV) is CTBP1-binding. The disordered stretch occupies residues 379 to 413 (PAASPPLSLPQTPTTPTAPLTPLSQTHSVITPTSL). Residues 387-404 (LPQTPTTPTAPLTPLSQT) show a composition bias toward low complexity. The segment at residues 448-538 (RPPFTYASLI…PQKISGSPAL (91 aa)) is a DNA-binding region (fork-head). Positions 590–659 (GAMDHGNSNG…EDDHGTEDML (70 aa)) are disordered. Residues 595–605 (GNSNGSDSSPG) show a composition bias toward polar residues. Positions 641-659 (PDFDHHRDYEDDHGTEDML) are enriched in basic and acidic residues.

In terms of tissue distribution, shows complex and dynamic expression during early embryonic development. Prominent in many regions of the developing central nervous system, particularly in midbrain-hindbrain boundary, hindbrain and spinal cord. Strongly expressed in the retina, ear, branchial arches, hatching gland, heart, pronephric duct, gut, proctodeum, pectoral fin and swim bladder.

The protein resides in the nucleus. Functionally, transcriptional repressor. The polypeptide is Forkhead box protein P1-B (foxp1b) (Danio rerio (Zebrafish)).